Here is a 144-residue protein sequence, read N- to C-terminus: Catabolic 3-dehydroquinase 1 (144 aa).

Tyr-24 functions as the Proton acceptor in the catalytic mechanism. Residues Asn-75, His-81, and Asp-88 each coordinate substrate. His-101 serves as the catalytic Proton donor. Residues 102-103 and Arg-112 contribute to the substrate site; that span reads IS.

Belongs to the type-II 3-dehydroquinase family. As to quaternary structure, homododecamer. Adopts a ring-like structure, composed of an arrangement of two hexameric rings stacked on top of one another.

The catalysed reaction is 3-dehydroquinate = 3-dehydroshikimate + H2O. It participates in aromatic compound metabolism; 3,4-dihydroxybenzoate biosynthesis; 3,4-dihydroxybenzoate from 3-dehydroquinate: step 1/2. Its function is as follows. Is involved in the catabolism of quinate. Allows the utilization of quinate as carbon source via the beta-ketoadipate pathway. The protein is Catabolic 3-dehydroquinase 1 of Fusarium vanettenii (strain ATCC MYA-4622 / CBS 123669 / FGSC 9596 / NRRL 45880 / 77-13-4) (Fusarium solani subsp. pisi).